Here is a 255-residue protein sequence, read N- to C-terminus: tRNA pseudouridine synthase A (255 aa).

The active-site Nucleophile is Asp-52. Residue Tyr-111 participates in substrate binding.

It belongs to the tRNA pseudouridine synthase TruA family. Homodimer.

The enzyme catalyses uridine(38/39/40) in tRNA = pseudouridine(38/39/40) in tRNA. Its function is as follows. Formation of pseudouridine at positions 38, 39 and 40 in the anticodon stem and loop of transfer RNAs. The chain is tRNA pseudouridine synthase A from Cereibacter sphaeroides (strain KD131 / KCTC 12085) (Rhodobacter sphaeroides).